We begin with the raw amino-acid sequence, 66 residues long: Phylloseptin-S4 (66 aa).

The first 22 residues, 1-22 (MAFLKKSLFLVLFLGLVSLSIC), serve as a signal peptide directing secretion. A propeptide spanning residues 23–46 (EEEKRETEEEEHDQEEDDKSEEKR) is cleaved from the precursor. The tract at residues 25 to 44 (EKRETEEEEHDQEEDDKSEE) is disordered. The span at 30 to 41 (EEEEHDQEEDDK) shows a compositional bias: acidic residues. Leu65 is modified (leucine amide).

As to expression, expressed by the skin glands.

The protein localises to the secreted. It is found in the target cell membrane. Functionally, antimicrobial peptide with high activity against Gram-positive bacteria, moderate activity against Gram-negative bacteria, and moderate activity against fungi. Acts by causing bacterial membrane disruption inducing leakage of the intracellular content followed by cell death. It adopts an alpha-helical amphipathic structure in membrane environments. Also shows highly potent antiparasitic activity against Leishmania species. Shows moderate hemolytic activity on human erythrocytes (LC(50)=33 uM). Is also active on human monocytes (IC(50)=23 uM). This is Phylloseptin-S4 from Phyllomedusa sauvagei (Sauvage's leaf frog).